The chain runs to 548 residues: mRNA cleavage and polyadenylation factor CLP1 (548 aa).

ATP-binding positions include Glu19, Lys60, and Ser123–Thr128. Basic and acidic residues predominate over residues Glu437–Glu481. Residues Glu437–Glu500 are disordered. Over residues Glu482 to Glu494 the composition is skewed to acidic residues.

It belongs to the Clp1 family. Clp1 subfamily. In terms of assembly, component of a pre-mRNA cleavage factor complex. Interacts directly with PCF11.

It localises to the nucleus. Required for endonucleolytic cleavage during polyadenylation-dependent pre-mRNA 3'-end formation. This Cryptococcus neoformans var. neoformans serotype D (strain B-3501A) (Filobasidiella neoformans) protein is mRNA cleavage and polyadenylation factor CLP1.